We begin with the raw amino-acid sequence, 330 residues long: Phenylalanine--tRNA ligase alpha subunit (330 aa).

Glutamate 246 provides a ligand contact to Mg(2+).

It belongs to the class-II aminoacyl-tRNA synthetase family. Phe-tRNA synthetase alpha subunit type 1 subfamily. Tetramer of two alpha and two beta subunits. The cofactor is Mg(2+).

The protein resides in the cytoplasm. It carries out the reaction tRNA(Phe) + L-phenylalanine + ATP = L-phenylalanyl-tRNA(Phe) + AMP + diphosphate + H(+). The polypeptide is Phenylalanine--tRNA ligase alpha subunit (Sulfurimonas denitrificans (strain ATCC 33889 / DSM 1251) (Thiomicrospira denitrificans (strain ATCC 33889 / DSM 1251))).